Consider the following 509-residue polypeptide: Pancreatic secretory granule membrane major glycoprotein GP2 (509 aa).

Residues 1–21 form the signal peptide; sequence MVGSYVLWLALASCILTLASP. A D10C region spans residues 36 to 56; the sequence is DPCQNYTLLDEPSRSTENTEG. Disulfide bonds link Cys-38–Cys-132, Cys-60–Cys-147, Cys-82–Cys-120, Cys-88–Cys-152, Cys-113–Cys-121, Cys-162–Cys-172, Cys-166–Cys-181, Cys-183–Cys-213, Cys-201–Cys-292, and Cys-233–Cys-256. Residues Asn-40, Asn-97, and Asn-109 are each glycosylated (N-linked (GlcNAc...) asparagine). Residues 158 to 202 form the EGF-like domain; that stretch reads ATDKCKNLCRPEEACSFLNGTWDCFCRSDLNSSDVHSLQPRLNCG. N-linked (GlcNAc...) asparagine glycosylation is found at Asn-176, Asn-188, and Asn-232. A ZP-N region spans residues 200 to 293; the sequence is NCGAKEIQVS…TILNINFQCA (94 aa). Residues 200–456 form the ZP domain; sequence NCGAKEIQVS…PCCSRSQQRS (257 aa). N-linked (GlcNAc...) asparagine glycosylation is found at Asn-263 and Asn-314. A flexible ZP-N/ZP-C linker region spans residues 294 to 317; sequence YPLDMKVSLQTALHPIVSSLNISV. The tract at residues 318–329 is internal hydrophobic patch (IHP); it reads DGEGEFTVRMAL. Positions 318-456 are ZP-C; that stretch reads DGEGEFTVRM…PCCSRSQQRS (139 aa). Disulfide bonds link Cys-373–Cys-433, Cys-394–Cys-449, and Cys-438–Cys-445. The tract at residues 463–471 is external hydrophobic patch (EHP); sequence PARVLDLGP. Asp-484 carries the GPI-anchor amidated aspartate lipid modification. Residues 485–509 constitute a propeptide, removed in mature form; the sequence is GTPSTAGFLLAWPMLLLPILLAELF.

In terms of assembly, interacts with SYCN. Interacts with bacterial adhesin fimH. In terms of processing, N-glycosylated. In terms of tissue distribution, expressed in pancreas.

The protein localises to the zymogen granule membrane. Its subcellular location is the secreted. It is found in the cell membrane. The protein resides in the apical cell membrane. It localises to the membrane raft. The protein localises to the endosome. Its function is as follows. Functions as an intestinal M-cell transcytotic receptor specific of type-I-piliated bacteria that participates in the mucosal immune response toward these bacteria. At the apical membrane of M-cells it binds fimH, a protein of the bacteria type I pilus tip. Internalizes bound bacteria, like E.coli and S.typhimurium, from the lumen of the intestine and delivers them, through M-cells, to the underlying organized lymphoid follicles where they are captured by antigen-presenting dendritic cells to elicit a mucosal immune response. This chain is Pancreatic secretory granule membrane major glycoprotein GP2, found in Canis lupus familiaris (Dog).